The sequence spans 386 residues: Probable mannan endo-1,4-beta-mannosidase A (386 aa).

The signal sequence occupies residues 1 to 21 (MKLNPSLLTAAGLVSAQLASA). The substrate site is built by Trp-95 and Asn-207. The active-site Proton donor is the Glu-208. Position 283 (Tyr-283) interacts with substrate. Glu-316 (nucleophile) is an active-site residue. Asn-336 carries an N-linked (GlcNAc...) asparagine glycan. Trp-346 is a substrate binding site.

Belongs to the glycosyl hydrolase 5 (cellulase A) family.

The protein resides in the secreted. It catalyses the reaction Random hydrolysis of (1-&gt;4)-beta-D-mannosidic linkages in mannans, galactomannans and glucomannans.. Endo-1,4-mannanase, a crucial enzyme for depolymerization of seed galactomannans and wood galactoglucomannans. This Aspergillus flavus (strain ATCC 200026 / FGSC A1120 / IAM 13836 / NRRL 3357 / JCM 12722 / SRRC 167) protein is Probable mannan endo-1,4-beta-mannosidase A (manA).